A 260-amino-acid chain; its full sequence is Thiazole synthase (260 aa).

K96 acts as the Schiff-base intermediate with DXP in catalysis. 1-deoxy-D-xylulose 5-phosphate contacts are provided by residues G157, A183–G184, and A205–S206.

Belongs to the ThiG family. As to quaternary structure, homotetramer. Forms heterodimers with either ThiH or ThiS.

The protein resides in the cytoplasm. The enzyme catalyses [ThiS sulfur-carrier protein]-C-terminal-Gly-aminoethanethioate + 2-iminoacetate + 1-deoxy-D-xylulose 5-phosphate = [ThiS sulfur-carrier protein]-C-terminal Gly-Gly + 2-[(2R,5Z)-2-carboxy-4-methylthiazol-5(2H)-ylidene]ethyl phosphate + 2 H2O + H(+). It functions in the pathway cofactor biosynthesis; thiamine diphosphate biosynthesis. Functionally, catalyzes the rearrangement of 1-deoxy-D-xylulose 5-phosphate (DXP) to produce the thiazole phosphate moiety of thiamine. Sulfur is provided by the thiocarboxylate moiety of the carrier protein ThiS. In vitro, sulfur can be provided by H(2)S. The protein is Thiazole synthase of Corynebacterium glutamicum (strain R).